We begin with the raw amino-acid sequence, 472 residues long: Dihydrolipoyl dehydrogenase 2 (472 aa).

FAD-binding positions include 39-47 (ERDAYGGTC), Lys-56, and Ala-118. A disulfide bridge links Cys-47 with Cys-52. NAD(+) contacts are provided by residues 186–190 (GAGYI), Glu-209, and 275–278 (AVGR). 2 residues coordinate FAD: Asp-318 and Ala-326. His-450 (proton acceptor) is an active-site residue.

Belongs to the class-I pyridine nucleotide-disulfide oxidoreductase family. Homodimer. The cofactor is FAD.

Its subcellular location is the cytoplasm. The enzyme catalyses N(6)-[(R)-dihydrolipoyl]-L-lysyl-[protein] + NAD(+) = N(6)-[(R)-lipoyl]-L-lysyl-[protein] + NADH + H(+). The protein is Dihydrolipoyl dehydrogenase 2 (lpdA2) of Haloarcula marismortui (strain ATCC 43049 / DSM 3752 / JCM 8966 / VKM B-1809) (Halobacterium marismortui).